Reading from the N-terminus, the 309-residue chain is Porphobilinogen deaminase (309 aa).

S-(dipyrrolylmethanemethyl)cysteine is present on C241.

Belongs to the HMBS family. Monomer. Dipyrromethane is required as a cofactor.

It catalyses the reaction 4 porphobilinogen + H2O = hydroxymethylbilane + 4 NH4(+). Its pathway is porphyrin-containing compound metabolism; protoporphyrin-IX biosynthesis; coproporphyrinogen-III from 5-aminolevulinate: step 2/4. Its function is as follows. Tetrapolymerization of the monopyrrole PBG into the hydroxymethylbilane pre-uroporphyrinogen in several discrete steps. In Geobacillus kaustophilus (strain HTA426), this protein is Porphobilinogen deaminase.